A 490-amino-acid chain; its full sequence is Adenylyltransferase and sulfurtransferase uba4 (490 aa).

The segment at 33 to 54 (EAAKTPPYSDSTETDRGSSSST) is disordered. ATP contacts are provided by residues G96, D117, 124–128 (SNLHR), K141, and 185–186 (DH). Zn(2+) is bound by residues C234 and C237. C251 (glycyl thioester intermediate; for adenylyltransferase activity) is an active-site residue. The Zn(2+) site is built by C323 and C326. Residues 379–488 (EHGKPVLLDV…WKREVDSTLP (110 aa)) form the Rhodanese domain. The active-site Cysteine persulfide intermediate; for sulfurtransferase activity is the C443.

This sequence in the N-terminal section; belongs to the HesA/MoeB/ThiF family. UBA4 subfamily. Requires Zn(2+) as cofactor.

It localises to the cytoplasm. It is found in the cytosol. The catalysed reaction is [molybdopterin-synthase sulfur-carrier protein]-C-terminal Gly-Gly + ATP + H(+) = [molybdopterin-synthase sulfur-carrier protein]-C-terminal Gly-Gly-AMP + diphosphate. The enzyme catalyses [molybdopterin-synthase sulfur-carrier protein]-C-terminal Gly-Gly-AMP + S-sulfanyl-L-cysteinyl-[cysteine desulfurase] + AH2 = [molybdopterin-synthase sulfur-carrier protein]-C-terminal-Gly-aminoethanethioate + L-cysteinyl-[cysteine desulfurase] + A + AMP + 2 H(+). It participates in tRNA modification; 5-methoxycarbonylmethyl-2-thiouridine-tRNA biosynthesis. In terms of biological role, plays a central role in 2-thiolation of mcm(5)S(2)U at tRNA wobble positions of cytosolic tRNA(Lys), tRNA(Glu) and tRNA(Gln). Also essential during biosynthesis of the molybdenum cofactor. Acts by mediating the C-terminal thiocarboxylation of sulfur carriers URM1 and MOCS2A. Its N-terminus first activates urm1 and MOCS2A as acyl-adenylates (-COAMP), then the persulfide sulfur on the catalytic cysteine is transferred to URM1 and MOCS2A to form thiocarboxylation (-COSH) of their C-terminus. The reaction probably involves hydrogen sulfide that is generated from the persulfide intermediate and that acts as a nucleophile towards URM1 and MOCS2A. Subsequently, a transient disulfide bond is formed. Does not use thiosulfate as sulfur donor; NFS1 probably acting as a sulfur donor for thiocarboxylation reactions. This Pyricularia oryzae (strain 70-15 / ATCC MYA-4617 / FGSC 8958) (Rice blast fungus) protein is Adenylyltransferase and sulfurtransferase uba4.